The primary structure comprises 286 residues: Oxidoreductase clz15 (286 aa).

It belongs to the asaB hydroxylase/desaturase family.

The protein operates within secondary metabolite biosynthesis. Oxidoreductase; part of the gene cluster that mediates the biosynthesis of squalestatin S1 (SQS1, also known as zaragozic acid A), a heavily oxidized fungal polyketide that offers potent cholesterol lowering activity by targeting squalene synthase (SS). SQS1 is composed of a 2,8-dioxobicyclic[3.2.1]octane-3,4,5-tricarboxyclic acid core that is connected to two lipophilic polyketide arms. These initial steps feature the priming of an unusual benzoic acid starter unit onto the highly reducing polyketide synthase clz14, followed by oxaloacetate extension and product release to generate a tricarboxylic acid containing product. The phenylalanine ammonia lyase (PAL) clz10 and the acyl-CoA ligase clz12 are involved in transforming phenylalanine into benzoyl-CoA. The citrate synthase-like protein clz17 is involved in connecting the C-alpha-carbons of the hexaketide chain and oxaloacetate to afford the tricarboxylic acid unit. The potential hydrolytic enzymes, clz11 and clz13, are in close proximity to pks2 and may participate in product release. On the other side, the tetraketide arm is synthesized by a the squalestatin tetraketide synthase clz2 and enzymatically esterified to the core in the last biosynthetic step, by the acetyltransferase clz6. The biosynthesis of the tetraketide must involve 3 rounds of chain extension. After the first and second rounds methyl-transfer occurs, and in all rounds of extension the ketoreductase and dehydratase are active. The enoyl reductase and C-MeT of clz2 are not active in the final round of extension. The acetyltransferase clz6 appears to have a broad substrate selectivity for its acyl CoA substrate, allowing the in vitro synthesis of novel squalestatins. The biosynthesis of SQS1 requires several oxidative steps likely performed by oxidoreductases clz3, clz15 and clz16. Finally, in support of the identification of the cluster as being responsible for SQS1 production, the cluster contains a gene encoding a putative squalene synthase (SS) clz20, suggesting a likely mechanism for self-resistance. The sequence is that of Oxidoreductase clz15 from Cochliobolus lunatus (Filamentous fungus).